A 338-amino-acid polypeptide reads, in one-letter code: Nicotinate-nucleotide--dimethylbenzimidazole phosphoribosyltransferase (338 aa).

The Proton acceptor role is filled by Glu-305.

This sequence belongs to the CobT family.

The enzyme catalyses 5,6-dimethylbenzimidazole + nicotinate beta-D-ribonucleotide = alpha-ribazole 5'-phosphate + nicotinate + H(+). Its pathway is nucleoside biosynthesis; alpha-ribazole biosynthesis; alpha-ribazole from 5,6-dimethylbenzimidazole: step 1/2. Its function is as follows. Catalyzes the synthesis of alpha-ribazole-5'-phosphate from nicotinate mononucleotide (NAMN) and 5,6-dimethylbenzimidazole (DMB). The sequence is that of Nicotinate-nucleotide--dimethylbenzimidazole phosphoribosyltransferase from Rhizobium etli (strain ATCC 51251 / DSM 11541 / JCM 21823 / NBRC 15573 / CFN 42).